Here is a 338-residue protein sequence, read N- to C-terminus: Anthranilate phosphoribosyltransferase (338 aa).

Residues G82, 85–86, T90, 92–95, 110–118, and S122 each bind 5-phospho-alpha-D-ribose 1-diphosphate; these read GD, NIST, and KHGNRAASS. G82 provides a ligand contact to anthranilate. S94 provides a ligand contact to Mg(2+). Anthranilate is bound at residue N113. Residue R168 participates in anthranilate binding. 2 residues coordinate Mg(2+): D226 and E227.

This sequence belongs to the anthranilate phosphoribosyltransferase family. As to quaternary structure, homodimer. Mg(2+) serves as cofactor.

It catalyses the reaction N-(5-phospho-beta-D-ribosyl)anthranilate + diphosphate = 5-phospho-alpha-D-ribose 1-diphosphate + anthranilate. It functions in the pathway amino-acid biosynthesis; L-tryptophan biosynthesis; L-tryptophan from chorismate: step 2/5. Catalyzes the transfer of the phosphoribosyl group of 5-phosphorylribose-1-pyrophosphate (PRPP) to anthranilate to yield N-(5'-phosphoribosyl)-anthranilate (PRA). This Deinococcus radiodurans (strain ATCC 13939 / DSM 20539 / JCM 16871 / CCUG 27074 / LMG 4051 / NBRC 15346 / NCIMB 9279 / VKM B-1422 / R1) protein is Anthranilate phosphoribosyltransferase.